A 169-amino-acid chain; its full sequence is Phosphopantetheine adenylyltransferase (169 aa).

Serine 10 serves as a coordination point for substrate. Residues 10-11 (SF) and histidine 18 contribute to the ATP site. 3 residues coordinate substrate: lysine 42, threonine 79, and arginine 93. Residues 94–96 (GLR), glutamate 104, and 129–135 (VRPITAT) each bind ATP.

This sequence belongs to the bacterial CoaD family. Homohexamer. It depends on Mg(2+) as a cofactor.

It localises to the cytoplasm. It catalyses the reaction (R)-4'-phosphopantetheine + ATP + H(+) = 3'-dephospho-CoA + diphosphate. It functions in the pathway cofactor biosynthesis; coenzyme A biosynthesis; CoA from (R)-pantothenate: step 4/5. Its function is as follows. Reversibly transfers an adenylyl group from ATP to 4'-phosphopantetheine, yielding dephospho-CoA (dPCoA) and pyrophosphate. The chain is Phosphopantetheine adenylyltransferase from Rhodopseudomonas palustris (strain TIE-1).